Here is a 144-residue protein sequence, read N- to C-terminus: Mercuric transport protein MerC (144 aa).

At M1–F21 the chain is on the cytoplasmic side. Residues S22–L42 form a helical membrane-spanning segment. The Hg(2+) site is built by C23 and C26. At S43–E46 the chain is on the periplasmic side. Residues G47–A67 traverse the membrane as a helical segment. At G68 to T78 the chain is on the cytoplasmic side. The chain crosses the membrane as a helical span at residues L79 to F99. The Periplasmic portion of the chain corresponds to L100–D103. A helical membrane pass occupies residues L104 to M124. At V125–S144 the chain is on the cytoplasmic side.

Monomer.

Its subcellular location is the cell inner membrane. Its activity is regulated as follows. Inhibited by the thiol-modifying reagent N-ethylmaleimide (NEM). Functionally, involved in mercuric ion uptake. The protein is Mercuric transport protein MerC of Acidithiobacillus ferrooxidans (Thiobacillus ferrooxidans).